We begin with the raw amino-acid sequence, 98 residues long: Putative membrane protein insertion efficiency factor (98 aa).

Belongs to the UPF0161 family.

The protein localises to the cell inner membrane. Functionally, could be involved in insertion of integral membrane proteins into the membrane. The sequence is that of Putative membrane protein insertion efficiency factor from Cupriavidus pinatubonensis (strain JMP 134 / LMG 1197) (Cupriavidus necator (strain JMP 134)).